The chain runs to 168 residues: MRACAILVVAAAAVLTGSTAISSTDALELATLSKTAQDVELSSVAAQPRSNIQRRLRKHKTVNTNSEMEYESEAEARGLVPEKLTNLVNKFKKVGGEVMLKTKSLNQLKKLSEKMEEKSLYALTDLEKKGYTPETLRDAIKNTPPKGMKDADADELIKFYDEYWKIFH.

Positions 1 to 20 (MRACAILVVAAAAVLTGSTA) are cleaved as a signal peptide. The RxLR-dEER signature appears at 54-77 (RRLRKHKTVNTNSEMEYESEAEAR).

Belongs to the RxLR effector family.

It localises to the secreted. It is found in the host nucleus. The protein resides in the host cytoplasm. Functionally, effector that enhances P.infestans colonization of Nicotiana benthamiana leaves. The chain is RxLR effector protein PITG_12737 from Phytophthora infestans (strain T30-4) (Potato late blight agent).